The chain runs to 380 residues: Coiled-coil domain-containing protein 74B (380 aa).

Disordered stretches follow at residues 1–51 (MSGA…KRNL), 89–108 (LIMN…HLSR), and 128–202 (GGPS…DVPQ). The span at 34–44 (LRPQSPQLRQS) shows a compositional bias: polar residues. Residues 47–93 (QKRNLDLEKSLQFLQQQHSEMLAKLHEEIEHLKRENKDLRYKLIMNQ) are a coiled coil. Positions 141–151 (RTHRPGGKHGR) are enriched in basic residues. Polar residues predominate over residues 165 to 182 (DSLSTSSFQSVKSISNSG).

The chain is Coiled-coil domain-containing protein 74B (CCDC74B) from Homo sapiens (Human).